The following is a 182-amino-acid chain: ATP-dependent protease subunit HslV (182 aa).

T7 is a catalytic residue. Residues G162, C165, and T168 each contribute to the Na(+) site.

This sequence belongs to the peptidase T1B family. HslV subfamily. As to quaternary structure, a double ring-shaped homohexamer of HslV is capped on each side by a ring-shaped HslU homohexamer. The assembly of the HslU/HslV complex is dependent on binding of ATP.

It localises to the cytoplasm. It catalyses the reaction ATP-dependent cleavage of peptide bonds with broad specificity.. Its activity is regulated as follows. Allosterically activated by HslU binding. Its function is as follows. Protease subunit of a proteasome-like degradation complex believed to be a general protein degrading machinery. The polypeptide is ATP-dependent protease subunit HslV (Legionella pneumophila subsp. pneumophila (strain Philadelphia 1 / ATCC 33152 / DSM 7513)).